The following is a 334-amino-acid chain: UDP-N-acetylenolpyruvoylglucosamine reductase (334 aa).

The region spanning 16–186 (INVFAKKIII…LSVGIKLPKT (171 aa)) is the FAD-binding PCMH-type domain. Arg-162 is a catalytic residue. Residue Ser-232 is the Proton donor of the active site. Glu-329 is an active-site residue.

It belongs to the MurB family. FAD is required as a cofactor.

It is found in the cytoplasm. It carries out the reaction UDP-N-acetyl-alpha-D-muramate + NADP(+) = UDP-N-acetyl-3-O-(1-carboxyvinyl)-alpha-D-glucosamine + NADPH + H(+). Its pathway is cell wall biogenesis; peptidoglycan biosynthesis. Cell wall formation. In Buchnera aphidicola subsp. Baizongia pistaciae (strain Bp), this protein is UDP-N-acetylenolpyruvoylglucosamine reductase.